The following is a 647-amino-acid chain: Macrolide export ATP-binding/permease protein MacB 2 (647 aa).

The region spanning 6–244 is the ABC transporter domain; it reads IQLKGIERRY…VTPTAAPAGK (239 aa). An ATP-binding site is contributed by 42–49; that stretch reads GASGSGKS. The tract at residues 223 to 247 is disordered; sequence QEDSGRKPAAVPVTPTAAPAGKEGV. Residues 230-242 show a composition bias toward low complexity; that stretch reads PAAVPVTPTAAPA. The next 4 helical transmembrane spans lie at 273–293, 527–547, 581–601, and 610–630; these read FLTM…VALG, IAVI…LVSV, LGGM…SLFV, and LFSI…FGYL.

This sequence belongs to the ABC transporter superfamily. Macrolide exporter (TC 3.A.1.122) family. In terms of assembly, homodimer. Part of the tripartite efflux system MacAB-TolC, which is composed of an inner membrane transporter, MacB, a periplasmic membrane fusion protein, MacA, and an outer membrane component, TolC. The complex forms a large protein conduit and can translocate molecules across both the inner and outer membranes. Interacts with MacA.

It localises to the cell inner membrane. In terms of biological role, part of the tripartite efflux system MacAB-TolC. MacB is a non-canonical ABC transporter that contains transmembrane domains (TMD), which form a pore in the inner membrane, and an ATP-binding domain (NBD), which is responsible for energy generation. Confers resistance against macrolides. In Aeromonas hydrophila subsp. hydrophila (strain ATCC 7966 / DSM 30187 / BCRC 13018 / CCUG 14551 / JCM 1027 / KCTC 2358 / NCIMB 9240 / NCTC 8049), this protein is Macrolide export ATP-binding/permease protein MacB 2.